The following is a 580-amino-acid chain: Mucolipin-1 (580 aa).

The tract at residues M1–E38 is disordered. Residues M1–K65 are Cytoplasmic-facing. S10 is modified (phosphoserine). The short motif at E11–L16 is the Dileucine motif; mediates targeting to lysosomes element. The interval R42–K62 is interaction with phosphoinositides. The chain crosses the membrane as a helical span at residues L66–S86. The Extracellular segment spans residues N87–R298. An extracellular/lumenal pore loop region spans residues L107 to T121. A disulfide bridge links C166 with C192. The N-linked (GlcNAc...) asparagine glycan is linked to N230. C253 and C284 are oxidised to a cystine. A helical membrane pass occupies residues L299–L321. The Cytoplasmic portion of the chain corresponds to R322–F350. Residues V351–M371 form a helical membrane-spanning segment. The Extracellular portion of the chain corresponds to K372–S382. A helical transmembrane segment spans residues Y383 to L405. The Cytoplasmic portion of the chain corresponds to T406–R427. Residues F428 to G448 form a helical membrane-spanning segment. Residues P449–S456 lie on the Extracellular side of the membrane. The pore-forming intramembrane region spans L457–F477. A Selectivity filter motif is present at residues N469–F474. At A478–W491 the chain is on the extracellular side. Residues L492–F513 form a helical membrane-spanning segment. Residues I514 to N580 are Cytoplasmic-facing. A phosphoserine; by PAK mark is found at S557 and S559. Positions C565–C567 are required for palmitoylation and association with membranes. A Dileucine internalization motif; mediates AP2 complex-dependent internalization motif is present at residues E573 to L578.

It belongs to the transient receptor (TC 1.A.4) family. Polycystin subfamily. MCOLN1 sub-subfamily. As to quaternary structure, homotetramer. Homooligomer. Can heterooligomerize with MCOLN2 or MCOLN3; heteromeric assemblies have different channel properties as compared to the respective homooligomers and may be tissue-specific. Interacts with PDCD6. Interacts with TMEM163. Interacts with LAPTM4B. Palmitoylated; involved in association with membranes. In terms of processing, phosphorylation by PKA inhibits channel activity. Dephosphorylation increases activity. Post-translationally, proteolytically cleaved probably involving multiple lysosomal proteases including cathepsin B; inhibits lysosomal channel activity. As to expression, widely expressed in adult and fetal tissues.

The protein resides in the late endosome membrane. It is found in the lysosome membrane. It localises to the cytoplasmic vesicle membrane. Its subcellular location is the cell projection. The protein localises to the phagocytic cup. The protein resides in the cytoplasmic vesicle. It is found in the phagosome membrane. It localises to the cell membrane. It carries out the reaction Ca(2+)(in) = Ca(2+)(out). It catalyses the reaction Fe(2+)(in) = Fe(2+)(out). The enzyme catalyses Mg(2+)(in) = Mg(2+)(out). The catalysed reaction is K(+)(in) = K(+)(out). It carries out the reaction Na(+)(in) = Na(+)(out). Channel activity is controlled by multiple regulatory mechanisms in different subcellular compartments. Channel function is transiently modulated by changes in Ca(2+) in a pH-dependent manner; pH changes modify the aggregation state of unitary channels; a negative cooperativity between extracellular/lumenal Ca(2+) and H(+) is suggested. Regulated by phosphoinositides in a compartment-specific manner: in lysosomes activated by PtdIns(3,5)P2 (Phosphatidylinositol 3,5-bisphosphate) and at the plasma membrane inhibited by PtdIns(4,5)P2 (Phosphatidylinositol 4,5-bisphosphate). In terms of biological role, nonselective cation channel probably playing a role in the regulation of membrane trafficking events and of metal homeostasis. Acts as a Ca(2+)-permeable cation channel with inwardly rectifying activity. Proposed to play a major role in Ca(2+) release from late endosome and lysosome vesicles to the cytoplasm, which is important for many lysosome-dependent cellular events, including the fusion and trafficking of these organelles, exocytosis and autophagy. Required for efficient uptake of large particles in macrophages in which Ca(2+) release from the lysosomes triggers lysosomal exocytosis. May also play a role in phagosome-lysosome fusion. Involved in lactosylceramide trafficking indicative for a role in the regulation of late endocytic membrane fusion/fission events. By mediating lysosomal Ca(2+) release is involved in regulation of mTORC1 signaling and in mTOR/TFEB-dependent lysosomal adaptation to environmental cues such as nutrient levels. Seems to act as lysosomal active oxygen species (ROS) sensor involved in ROS-induced TFEB activation and autophagy. Also functions as a Fe(2+) permeable channel in late endosomes and lysosomes. Also permeable to Mg(2+), Na(+). K(+) and Cs(+). Proposed to play a role in zinc homeostasis probably implicating its association with TMEM163 In adaptive immunity, TRPML2 and TRPML1 may play redundant roles in the function of the specialized lysosomes of B cells. May contribute to cellular lipase activity within the late endosomal pathway or at the cell surface which may be involved in processes of membrane reshaping and vesiculation, especially the growth of tubular structures. However, it is not known, whether it conveys the enzymatic activity directly, or merely facilitates the activity of an associated phospholipase. The chain is Mucolipin-1 from Homo sapiens (Human).